Here is a 358-residue protein sequence, read N- to C-terminus: MNQVRKWNIIGGRVIKTGIAVFLTVLVCEFFNIPTIFAVITAIVTIEPTATDSIKKGLVRFPASTIGSAYAMTFTFFLGHQALSYALAAMFTIVTCQKLRLHAGTLVATLTAVAMIPITADHYFTAFLIRLATTSTGIIVSTVVNFFILPPHYVKTISGCTEELFVKTANVMEEWLTALMDGKVIKKETTYNLSKLTVLLHKAVQFVQYEQKDWKYHRHTKKEMRSFLLVQKQLHLLQQIIYHIDNLARAPIETCDWSQNEKEILRRTIHSIISILRNHCEKIDEEHFKLIDELDKQFWTNKNDLAHCKPNQYHHHFSSESIILFEVLSIHDMLEELKQIFEKYEGENQEKSILVDIK.

4 helical membrane-spanning segments follow: residues 19–39, 74–94, 109–129, and 131–151; these read IAVFLTVLVCEFFNIPTIFAV, FTFFLGHQALSYALAAMFTIV, TLTAVAMIPITADHYFTAFLI, and LATTSTGIIVSTVVNFFILPP.

It belongs to the UPF0421 family.

It is found in the cell membrane. This is UPF0421 protein BT9727_2513 from Bacillus thuringiensis subsp. konkukian (strain 97-27).